Reading from the N-terminus, the 1090-residue chain is Neurofilament heavy polypeptide (1090 aa).

Residues 2-98 (MSFGSADALL…AVAARSEKEQ (97 aa)) are head. 2 positions are modified to phosphoserine: S74 and S122. Residues 95-411 (EKEQLQALND…KLLEGEECRI (317 aa)) enclose the IF rod domain. The coil 1A stretch occupies residues 99–130 (LQALNDRFAGYIDKVRQLEAHNRSLEGEAAAL). The linker 1 stretch occupies residues 131 to 143 (RQQQAGRAAMGEL). Residues 144-242 (YEREVREMRG…QEEVGELLGQ (99 aa)) form a coil 1B region. Residues 243–264 (IQGCGAAQAQAQAEARDALKCD) form a linker 12 region. The segment at 265-286 (VTSALREIRAQLEGHAVQSTLQ) is coil 2A. The linker 2 stretch occupies residues 287–290 (SEEW). The tract at residues 291–411 (FRVRLDRLSE…KLLEGEECRI (121 aa)) is coil 2B. A phosphoserine mark is found at S345, S416, and S419. Residues 412–1090 (GFGPSPFSLT…TEDKATKGEK (679 aa)) are tail. Positions 456-1090 (EGQTEEIRVT…TEDKATKGEK (635 aa)) are disordered. A compositionally biased stretch (acidic residues) spans 468 to 495 (VTEEEDKEAQGQEGEEAEEGEEKEEEEG). Residues 496–506 (AAATSPPAEEA) are compositionally biased toward low complexity. Phosphoserine occurs at positions 508, 523, 529, 535, 541, 547, 553, 559, 565, 571, 577, 583, 589, 595, 601, 607, 613, 619, 625, 631, 637, 643, 649, 655, 661, 667, 673, 679, 685, 691, 697, 703, 709, 715, 721, 727, 733, 739, 745, 751, 757, 763, and 769. The segment covering 508–579 (SPEKETKSRV…KSPAEAKSPA (72 aa)) has biased composition (basic and acidic residues). 42 tandem repeats follow at residues 522–527 (KSPGEA), 528–533 (KSPGEA), 534–539 (KSPAEA), 540–545 (KSPGEA), 546–551 (KSPGEA), 552–557 (KSPGEA), 558–563 (KSPAEP), 564–569 (KSPAEP), 570–575 (KSPAEA), 576–581 (KSPAEP), 582–587 (KSPATV), 588–593 (KSPGEA), 594–599 (KSPSEA), 600–605 (KSPAEA), 606–611 (KSPAEA), 612–617 (KSPAEA), 618–623 (KSPAEA), 624–629 (KSPAEA), 630–635 (KSPAEA), 636–641 (KSPATV), 642–647 (KSPGEA), 648–653 (KSPSEA), 654–659 (KSPAEA), 660–665 (KSPAEA), 666–671 (KSPAEA), 672–677 (KSPAEV), 678–683 (KSPGEA), 684–689 (KSPAEP), 690–695 (KSPAEA), 696–701 (KSPAEV), 702–707 (KSPAEA), 708–713 (KSPAEV), 714–719 (KSPGEA), 720–725 (KSPAAV), 726–731 (KSPAEA), 732–737 (KSPAAV), 738–743 (KSPGEA), 744–749 (KSPGEA), 750–755 (KSPAEA), 756–761 (KSPAEA), 762–767 (KSPIEV), and 768–773 (KSPEKA). The segment at 522 to 892 (KSPGEAKSPG…KEEVKSPVKE (371 aa)) is 52 X 6 AA approximate tandem repeats of K-S-P-[AGISV]-[EATK]-[APVQ]. Over residues 595–633 (SPSEAKSPAEAKSPAEAKSPAEAKSPAEAKSPAEAKSPA) the composition is skewed to basic and acidic residues. Residues 649 to 717 (SPSEAKSPAE…KSPAEVKSPG (69 aa)) are compositionally biased toward basic and acidic residues. Residues 745 to 781 (SPGEAKSPAEAKSPAEAKSPIEVKSPEKAKTPVKEGA) show a composition bias toward basic and acidic residues. The 43; approximate repeat unit spans residues 774 to 779 (KTPVKE). A run of 6 repeats spans residues 782-787 (KSPAEA), 788-793 (KSPEKA), 794-799 (KSPVKE), 808-813 (KSPEKA), 814-819 (KSPVKE), and 833-838 (KSPEAQ). Phosphoserine occurs at positions 783, 789, 795, 809, 815, and 834. Residues 788–834 (KSPEKAKSPVKEDIKPPAEAKSPEKAKSPVKEGAKPPEKAKPLDVKS) show a composition bias toward basic and acidic residues. T839 carries the phosphothreonine modification. Composition is skewed to basic and acidic residues over residues 843-964 (EEAK…KAVA) and 974-1090 (GVKE…KGEK). Tandem repeats lie at residues 858 to 863 (KSPAKE), 866 to 871 (KSPEKE), and 887 to 892 (KSPVKE). Phosphoserine is present on residues S859, S867, S888, and S947.

This sequence belongs to the intermediate filament family. In terms of assembly, forms heterodimers with NEFL; which can further hetero-oligomerize (in vitro). Forms heterodimers with INA (in vitro). There are a number of repeats of the tripeptide K-S-P, NFH is phosphorylated on a number of the serines in this motif. It is thought that phosphorylation of NFH results in the formation of interfilament cross bridges that are important in the maintenance of axonal caliber. Post-translationally, phosphorylation seems to play a major role in the functioning of the larger neurofilament polypeptides (NF-M and NF-H), the levels of phosphorylation being altered developmentally and coincidentally with a change in the neurofilament function. In terms of processing, phosphorylated in the head and rod regions by the PKC kinase PKN1, leading to the inhibition of polymerization. As to expression, expressed in the sciatic nerve (at protein level).

The protein localises to the cytoplasm. The protein resides in the cytoskeleton. It is found in the cell projection. It localises to the axon. In terms of biological role, neurofilaments usually contain three intermediate filament proteins: NEFL, NEFM, and NEFH which are involved in the maintenance of neuronal caliber. NEFH has an important function in mature axons that is not subserved by the two smaller NF proteins. May additionally cooperate with the neuronal intermediate filament proteins PRPH and INA to form neuronal filamentous networks. This is Neurofilament heavy polypeptide (Nefh) from Mus musculus (Mouse).